The following is a 234-amino-acid chain: Uridylate kinase (234 aa).

9-10 (GS) is an ATP binding site. G43 contacts UMP. G44 and R48 together coordinate ATP. UMP-binding positions include D65 and 113 to 119 (VIPGQTT). Residues T139, Y145, and D148 each coordinate ATP.

It belongs to the UMP kinase family. In terms of assembly, homohexamer.

It is found in the cytoplasm. It carries out the reaction UMP + ATP = UDP + ADP. Its pathway is pyrimidine metabolism; CTP biosynthesis via de novo pathway; UDP from UMP (UMPK route): step 1/1. Inhibited by UTP. Functionally, catalyzes the reversible phosphorylation of UMP to UDP. The sequence is that of Uridylate kinase from Methanococcoides burtonii (strain DSM 6242 / NBRC 107633 / OCM 468 / ACE-M).